The sequence spans 301 residues: Ribosomal RNA small subunit methyltransferase H (301 aa).

Residues 31 to 33, Asp49, Phe76, Asp97, and Gln104 each bind S-adenosyl-L-methionine; that span reads GGY.

This sequence belongs to the methyltransferase superfamily. RsmH family.

The protein resides in the cytoplasm. The catalysed reaction is cytidine(1402) in 16S rRNA + S-adenosyl-L-methionine = N(4)-methylcytidine(1402) in 16S rRNA + S-adenosyl-L-homocysteine + H(+). Its function is as follows. Specifically methylates the N4 position of cytidine in position 1402 (C1402) of 16S rRNA. The chain is Ribosomal RNA small subunit methyltransferase H from Ehrlichia ruminantium (strain Welgevonden).